Consider the following 290-residue polypeptide: 4-diphosphocytidyl-2-C-methyl-D-erythritol kinase (290 aa).

Lysine 10 is a catalytic residue. Residue 95–105 participates in ATP binding; that stretch reads PVAAGLAGGSS. Residue aspartate 137 is part of the active site.

The protein belongs to the GHMP kinase family. IspE subfamily.

The catalysed reaction is 4-CDP-2-C-methyl-D-erythritol + ATP = 4-CDP-2-C-methyl-D-erythritol 2-phosphate + ADP + H(+). It participates in isoprenoid biosynthesis; isopentenyl diphosphate biosynthesis via DXP pathway; isopentenyl diphosphate from 1-deoxy-D-xylulose 5-phosphate: step 3/6. Catalyzes the phosphorylation of the position 2 hydroxy group of 4-diphosphocytidyl-2C-methyl-D-erythritol. This Geobacillus kaustophilus (strain HTA426) protein is 4-diphosphocytidyl-2-C-methyl-D-erythritol kinase.